The sequence spans 414 residues: Secernin-1 (414 aa).

Belongs to the peptidase C69 family. Secernin subfamily.

The protein resides in the cytoplasm. In terms of biological role, regulates exocytosis in mast cells. Increases both the extent of secretion and the sensitivity of mast cells to stimulation with calcium. The chain is Secernin-1 (Scrn1) from Rattus norvegicus (Rat).